A 379-amino-acid chain; its full sequence is Homoserine O-succinyltransferase (379 aa).

The 310-residue stretch at 48 to 357 (NAVLICHALS…SAHGHDAFLM (310 aa)) folds into the AB hydrolase-1 domain. Ser-154 serves as the catalytic Nucleophile. Substrate is bound at residue Arg-224. Catalysis depends on residues Asp-319 and His-352. Residue Asp-353 participates in substrate binding.

The protein belongs to the AB hydrolase superfamily. MetX family. As to quaternary structure, homodimer.

The protein resides in the cytoplasm. The catalysed reaction is L-homoserine + succinyl-CoA = O-succinyl-L-homoserine + CoA. The protein operates within amino-acid biosynthesis; L-methionine biosynthesis via de novo pathway; O-succinyl-L-homoserine from L-homoserine: step 1/1. Transfers a succinyl group from succinyl-CoA to L-homoserine, forming succinyl-L-homoserine. The chain is Homoserine O-succinyltransferase from Neisseria meningitidis serogroup A / serotype 4A (strain DSM 15465 / Z2491).